A 2995-amino-acid polypeptide reads, in one-letter code: Striated muscle preferentially expressed protein kinase (2995 aa).

Residues 27-109 (PPVFLRKLKW…GEARTSAVLA (83 aa)) enclose the Ig-like 1 domain. Cysteine 50 and cysteine 93 are disulfide-bonded. Disordered stretches follow at residues 250-272 (ITGS…KVSQ) and 384-467 (LTQT…NSKP). Over residues 384–404 (LTQTDKQSSVSTESVPTQVIQ) the composition is skewed to polar residues. The span at 454–464 (PPEMNENQENN) shows a compositional bias: low complexity. Ig-like domains are found at residues 613-701 (PAES…EELI) and 714-802 (PLFT…AELY). Cysteine 639 and cysteine 691 form a disulfide bridge. The tract at residues 815 to 834 (SRLEKMPSIPEEPEVPEGEV) is disordered. The Ig-like 4 domain maps to 840–930 (PDFIKPLSDL…AACYAHLYVA (91 aa)). A disulfide bridge links cysteine 861 with cysteine 912. The Fibronectin type-III 1 domain occupies 937-1035 (PDGPPVIESV…TDLVQLVDRG (99 aa)). An Ig-like 5 domain is found at 1135–1224 (PPIFETIMED…GSVSCKAELT (90 aa)). One can recognise a Protein kinase 1 domain in the interval 1255 to 1505 (YDIHKEIGRG…ATECLLHPWF (251 aa)). ATP is bound by residues 1261–1269 (IGRGAFSYV) and lysine 1283. The Proton acceptor role is filled by aspartate 1372. Disordered stretches follow at residues 1559–1582 (VPRN…DIDE), 1776–1839 (RNFR…STGD), 2017–2058 (LKRL…TGLK), 2163–2189 (VHSR…VEKQ), 2211–2254 (SGIS…KMDI), and 2268–2322 (SKET…KEDF). Residues 1786–1795 (SGDSGTFNND) show a composition bias toward polar residues. Positions 2274-2284 (SSSSAHSIESS) are enriched in low complexity. A compositionally biased stretch (basic and acidic residues) spans 2289–2299 (TEIRSRWDRWG). The 91-residue stretch at 2323–2413 (PPVFHIALKD…ASVTTSCILT (91 aa)) folds into the Ig-like 6 domain. Cysteine 2345 and cysteine 2397 form a disulfide bridge. The Fibronectin type-III 2 domain maps to 2420-2513 (CPGTPEIRQI…DGVSIDTKVT (94 aa)). 2 disordered regions span residues 2574 to 2609 (PKMS…YTAP) and 2648 to 2676 (GEGA…LRQG). Polar residues-rich tracts occupy residues 2587–2605 (SSVN…SPRS) and 2652–2674 (SSPT…TTLR). Residues 2682-2934 (YSFLDEKARG…IKDCLNHSWL (253 aa)) enclose the Protein kinase 2 domain. ATP contacts are provided by residues 2688–2696 (KARGRFGVI) and lysine 2711. Residue aspartate 2801 is the Proton acceptor of the active site.

The protein belongs to the protein kinase superfamily. CAMK Ser/Thr protein kinase family. Post-translationally, may be autophosphorylated. As to expression, preferentially expressed in striated muscle.

Its subcellular location is the nucleus. The catalysed reaction is L-seryl-[protein] + ATP = O-phospho-L-seryl-[protein] + ADP + H(+). The enzyme catalyses L-threonyl-[protein] + ATP = O-phospho-L-threonyl-[protein] + ADP + H(+). In Danio rerio (Zebrafish), this protein is Striated muscle preferentially expressed protein kinase (speg).